The sequence spans 247 residues: Probable proteasome subunit alpha type-5 (247 aa).

The residue at position 55 (T55) is a Phosphothreonine.

This sequence belongs to the peptidase T1A family. The 26S proteasome consists of a 20S proteasome core and two 19S regulatory subunits. The 20S proteasome core is composed of 28 subunits that are arranged in four stacked rings, resulting in a barrel-shaped structure. The two end rings are each formed by seven alpha subunits, and the two central rings are each formed by seven beta subunits. The catalytic chamber with the active sites is on the inside of the barrel.

Its subcellular location is the cytoplasm. The protein resides in the nucleus. In terms of biological role, the proteasome is a multicatalytic proteinase complex which is characterized by its ability to cleave peptides with Arg, Phe, Tyr, Leu, and Glu adjacent to the leaving group at neutral or slightly basic pH. The proteasome has an ATP-dependent proteolytic activity. This is Probable proteasome subunit alpha type-5 (pup2) from Schizosaccharomyces pombe (strain 972 / ATCC 24843) (Fission yeast).